Reading from the N-terminus, the 334-residue chain is Iron-uptake system permease protein FeuB (334 aa).

9 consecutive transmembrane segments (helical) span residues 9–29, 63–83, 91–111, 119–139, 150–170, 191–211, 243–263, 281–301, and 305–325; these read IILI…ILYG, AAGA…MQGI, PSIM…MVLL, MMIY…GLAA, LAII…AMSI, PDFL…AISL, VIIL…VGLV, PCSC…SRFI, and FETP…LYLI.

This sequence belongs to the binding-protein-dependent transport system permease family. FecCD subfamily. As to quaternary structure, the complex is composed of one ATP-binding protein (YusV), two transmembrane proteins (FeuB and FeuC) and a solute-binding protein (FeuA).

The protein localises to the cell membrane. It localises to the membrane raft. Its function is as follows. Involved in the uptake of iron. Probably responsible for the translocation of the substrate across the membrane. Part of the ABC transporter complex FeuABC/YusV involved in import of the catecholate siderophores bacillibactin and enterobactin. This Bacillus subtilis (strain 168) protein is Iron-uptake system permease protein FeuB (feuB).